Here is a 398-residue protein sequence, read N- to C-terminus: Phosphoglycerate kinase (398 aa).

Residues 23 to 25 (DFN), R38, 61 to 64 (HLGK), R122, and R155 contribute to the substrate site. Residues K206, G297, E328, and 354–357 (GGDS) each bind ATP.

It belongs to the phosphoglycerate kinase family. As to quaternary structure, monomer.

It localises to the cytoplasm. It carries out the reaction (2R)-3-phosphoglycerate + ATP = (2R)-3-phospho-glyceroyl phosphate + ADP. The protein operates within carbohydrate degradation; glycolysis; pyruvate from D-glyceraldehyde 3-phosphate: step 2/5. The chain is Phosphoglycerate kinase from Clostridium novyi (strain NT).